The primary structure comprises 713 residues: Glycine--tRNA ligase beta subunit (713 aa).

The protein belongs to the class-II aminoacyl-tRNA synthetase family. Tetramer of two alpha and two beta subunits.

The protein resides in the cytoplasm. The enzyme catalyses tRNA(Gly) + glycine + ATP = glycyl-tRNA(Gly) + AMP + diphosphate. This Picosynechococcus sp. (strain ATCC 27264 / PCC 7002 / PR-6) (Agmenellum quadruplicatum) protein is Glycine--tRNA ligase beta subunit.